The sequence spans 347 residues: Holliday junction branch migration complex subunit RuvB (347 aa).

The interval 1–186 (MKDENSISFL…FGITARFELY (186 aa)) is large ATPase domain (RuvB-L). ATP-binding positions include Leu-25, Arg-26, Gly-67, Lys-70, Thr-71, Thr-72, 133–135 (EDY), Arg-176, Tyr-186, and Arg-223. Thr-71 lines the Mg(2+) pocket. Residues 187 to 257 (SEIELVEIIK…IVSIGLEMLR (71 aa)) are small ATPAse domain (RuvB-S). Residues 260–347 (GEGLDEQDRN…GLNENQRVSF (88 aa)) are head domain (RuvB-H). DNA-binding residues include Arg-315 and Arg-320.

The protein belongs to the RuvB family. Homohexamer. Forms an RuvA(8)-RuvB(12)-Holliday junction (HJ) complex. HJ DNA is sandwiched between 2 RuvA tetramers; dsDNA enters through RuvA and exits via RuvB. An RuvB hexamer assembles on each DNA strand where it exits the tetramer. Each RuvB hexamer is contacted by two RuvA subunits (via domain III) on 2 adjacent RuvB subunits; this complex drives branch migration. In the full resolvosome a probable DNA-RuvA(4)-RuvB(12)-RuvC(2) complex forms which resolves the HJ.

The protein localises to the cytoplasm. It carries out the reaction ATP + H2O = ADP + phosphate + H(+). Functionally, the RuvA-RuvB-RuvC complex processes Holliday junction (HJ) DNA during genetic recombination and DNA repair, while the RuvA-RuvB complex plays an important role in the rescue of blocked DNA replication forks via replication fork reversal (RFR). RuvA specifically binds to HJ cruciform DNA, conferring on it an open structure. The RuvB hexamer acts as an ATP-dependent pump, pulling dsDNA into and through the RuvAB complex. RuvB forms 2 homohexamers on either side of HJ DNA bound by 1 or 2 RuvA tetramers; 4 subunits per hexamer contact DNA at a time. Coordinated motions by a converter formed by DNA-disengaged RuvB subunits stimulates ATP hydrolysis and nucleotide exchange. Immobilization of the converter enables RuvB to convert the ATP-contained energy into a lever motion, pulling 2 nucleotides of DNA out of the RuvA tetramer per ATP hydrolyzed, thus driving DNA branch migration. The RuvB motors rotate together with the DNA substrate, which together with the progressing nucleotide cycle form the mechanistic basis for DNA recombination by continuous HJ branch migration. Branch migration allows RuvC to scan DNA until it finds its consensus sequence, where it cleaves and resolves cruciform DNA. In Borreliella burgdorferi (strain ATCC 35210 / DSM 4680 / CIP 102532 / B31) (Borrelia burgdorferi), this protein is Holliday junction branch migration complex subunit RuvB.